The primary structure comprises 818 residues: Lon protease (818 aa).

Residues 14-216 (LPVLPLRDVV…KVFALIEREI (203 aa)) form the Lon N-terminal domain. 370-377 (GPPGVGKT) lines the ATP pocket. The 182-residue stretch at 605-786 (ESLVGIVTGL…DEVIKVALMH (182 aa)) folds into the Lon proteolytic domain. Catalysis depends on residues Ser-692 and Lys-735.

It belongs to the peptidase S16 family. In terms of assembly, homohexamer. Organized in a ring with a central cavity.

Its subcellular location is the cytoplasm. It catalyses the reaction Hydrolysis of proteins in presence of ATP.. Functionally, ATP-dependent serine protease that mediates the selective degradation of mutant and abnormal proteins as well as certain short-lived regulatory proteins. Required for cellular homeostasis and for survival from DNA damage and developmental changes induced by stress. Degrades polypeptides processively to yield small peptide fragments that are 5 to 10 amino acids long. Binds to DNA in a double-stranded, site-specific manner. The protein is Lon protease of Wolbachia pipientis subsp. Culex pipiens (strain wPip).